The sequence spans 202 residues: LexA repressor (202 aa).

A DNA-binding region (H-T-H motif) is located at residues 28–48 (RAEIAQRLGFRSPNAAEEHLK). Active-site for autocatalytic cleavage activity residues include S119 and K156.

Belongs to the peptidase S24 family. Homodimer.

It carries out the reaction Hydrolysis of Ala-|-Gly bond in repressor LexA.. Functionally, represses a number of genes involved in the response to DNA damage (SOS response), including recA and lexA. Binds to the 16 bp palindromic sequence 5'-CTGTATATATATACAG-3'. In the presence of single-stranded DNA, RecA interacts with LexA causing an autocatalytic cleavage which disrupts the DNA-binding part of LexA, leading to derepression of the SOS regulon and eventually DNA repair. In Escherichia coli (strain K12 / MC4100 / BW2952), this protein is LexA repressor.